The sequence spans 511 residues: Exodeoxyribonuclease 7 large subunit (511 aa).

The protein belongs to the XseA family. As to quaternary structure, heterooligomer composed of large and small subunits.

The protein resides in the cytoplasm. The catalysed reaction is Exonucleolytic cleavage in either 5'- to 3'- or 3'- to 5'-direction to yield nucleoside 5'-phosphates.. Bidirectionally degrades single-stranded DNA into large acid-insoluble oligonucleotides, which are then degraded further into small acid-soluble oligonucleotides. In Brucella melitensis biotype 1 (strain ATCC 23456 / CCUG 17765 / NCTC 10094 / 16M), this protein is Exodeoxyribonuclease 7 large subunit.